The primary structure comprises 149 residues: Transcriptional repressor NrdR (149 aa).

A zinc finger lies at Cys3 to Cys34. The ATP-cone domain maps to Pro49–Glu139.

This sequence belongs to the NrdR family. It depends on Zn(2+) as a cofactor.

Negatively regulates transcription of bacterial ribonucleotide reductase nrd genes and operons by binding to NrdR-boxes. In Pseudoalteromonas atlantica (strain T6c / ATCC BAA-1087), this protein is Transcriptional repressor NrdR.